Consider the following 138-residue polypeptide: uncharacterized protein (138 aa).

This is an uncharacterized protein from Escherichia coli (strain K12).